The chain runs to 153 residues: MGEKLICNNKKAFHDYFIEERFEAGMVLKGTEVKSLRMGKANLNDSFALVRDGEIFLHNLHINPYDFGNRQNHDPDRLRKLLMHKSEIEKLFGKIREKGYSVVPLRLYFKNGLAKVELGLAKGKKLYDKREDMKKKDQSREMAQALRERSKSH.

The tract at residues 129–153 is disordered; the sequence is KREDMKKKDQSREMAQALRERSKSH.

This sequence belongs to the SmpB family.

The protein resides in the cytoplasm. Its function is as follows. Required for rescue of stalled ribosomes mediated by trans-translation. Binds to transfer-messenger RNA (tmRNA), required for stable association of tmRNA with ribosomes. tmRNA and SmpB together mimic tRNA shape, replacing the anticodon stem-loop with SmpB. tmRNA is encoded by the ssrA gene; the 2 termini fold to resemble tRNA(Ala) and it encodes a 'tag peptide', a short internal open reading frame. During trans-translation Ala-aminoacylated tmRNA acts like a tRNA, entering the A-site of stalled ribosomes, displacing the stalled mRNA. The ribosome then switches to translate the ORF on the tmRNA; the nascent peptide is terminated with the 'tag peptide' encoded by the tmRNA and targeted for degradation. The ribosome is freed to recommence translation, which seems to be the essential function of trans-translation. This Geobacter metallireducens (strain ATCC 53774 / DSM 7210 / GS-15) protein is SsrA-binding protein.